A 446-amino-acid chain; its full sequence is uncharacterized protein (446 aa).

Disordered regions lie at residues 63-95 and 155-232; these read KNKP…SDLR and AESS…HPVK. Over residues 156–169 the composition is skewed to polar residues; the sequence is ESSVPTPKLTNESN. Composition is skewed to basic and acidic residues over residues 182 to 199 and 213 to 227; these read DQHE…DHSA and ITKE…EARK.

This is an uncharacterized protein from Mus musculus (Mouse).